Reading from the N-terminus, the 245-residue chain is PF03932 family protein CutC (245 aa).

Belongs to the CutC family.

It localises to the cytoplasm. In Sinorhizobium medicae (strain WSM419) (Ensifer medicae), this protein is PF03932 family protein CutC.